Reading from the N-terminus, the 207-residue chain is Prolactin (207 aa).

The N-terminal stretch at 1–20 (KSRLYFAVTVLMCAFVSING) is a signal peptide. Cystine bridges form between Cys-66–Cys-180 and Cys-197–Cys-207.

Belongs to the somatotropin/prolactin family. Pituitary gland.

Its subcellular location is the secreted. The sequence is that of Prolactin (prl) from Hypophthalmichthys molitrix (Silver carp).